The primary structure comprises 330 residues: Peptide transport system ATP-binding protein SapD (330 aa).

In terms of domain architecture, ABC transporter spans 6–259 (IRNLTIEFKT…PHHPYTQALI (254 aa)). 40–47 (GESGSGKS) lines the ATP pocket.

It belongs to the ABC transporter superfamily.

It is found in the cell inner membrane. Involved in a peptide intake transport system that plays a role in the resistance to antimicrobial peptides. The sequence is that of Peptide transport system ATP-binding protein SapD (sapD) from Escherichia coli O157:H7.